Here is a 306-residue protein sequence, read N- to C-terminus: Cysteine synthase (306 aa).

Lysine 46 carries the post-translational modification N6-(pyridoxal phosphate)lysine. Pyridoxal 5'-phosphate-binding positions include asparagine 76, 180–184, and serine 267; that span reads GSGGT.

Belongs to the cysteine synthase/cystathionine beta-synthase family. Homodimer. The cofactor is pyridoxal 5'-phosphate.

The enzyme catalyses O-acetyl-L-serine + hydrogen sulfide = L-cysteine + acetate. It participates in amino-acid biosynthesis; L-cysteine biosynthesis; L-cysteine from L-serine: step 2/2. The polypeptide is Cysteine synthase (cysM) (Helicobacter pylori (strain ATCC 700392 / 26695) (Campylobacter pylori)).